A 421-amino-acid polypeptide reads, in one-letter code: Phosphoribosylamine--glycine ligase (421 aa).

The 207-residue stretch at 108–314 (KEIMVKYNVP…FAQNIDDIMM (207 aa)) folds into the ATP-grasp domain. Residue 134–195 (IEEQGAPIVV…EEFLDGEEFS (62 aa)) coordinates ATP. The Mg(2+) site is built by E284 and N286.

The protein belongs to the GARS family. The cofactor is Mg(2+). Mn(2+) serves as cofactor.

It catalyses the reaction 5-phospho-beta-D-ribosylamine + glycine + ATP = N(1)-(5-phospho-beta-D-ribosyl)glycinamide + ADP + phosphate + H(+). It participates in purine metabolism; IMP biosynthesis via de novo pathway; N(1)-(5-phospho-D-ribosyl)glycinamide from 5-phospho-alpha-D-ribose 1-diphosphate: step 2/2. This is Phosphoribosylamine--glycine ligase from Streptococcus pyogenes serotype M18 (strain MGAS8232).